A 523-amino-acid chain; its full sequence is GMP synthase [glutamine-hydrolyzing] (523 aa).

The region spanning 8 to 205 (KILILDFGSQ…VVNICGCETK (198 aa)) is the Glutamine amidotransferase type-1 domain. The Nucleophile role is filled by C85. Catalysis depends on residues H179 and E181. A GMPS ATP-PPase domain is found at 206–398 (WTAENIIEDA…LGLPAEMLNR (193 aa)). 233–239 (SGGVDSS) contacts ATP.

As to quaternary structure, homodimer.

The catalysed reaction is XMP + L-glutamine + ATP + H2O = GMP + L-glutamate + AMP + diphosphate + 2 H(+). It participates in purine metabolism; GMP biosynthesis; GMP from XMP (L-Gln route): step 1/1. Its function is as follows. Catalyzes the synthesis of GMP from XMP. This chain is GMP synthase [glutamine-hydrolyzing], found in Glaesserella parasuis serovar 5 (strain SH0165) (Haemophilus parasuis).